We begin with the raw amino-acid sequence, 284 residues long: Tryptophan 2,3-dioxygenase (284 aa).

Residues 53 to 57 (FIVQH), Y115, and R119 contribute to the substrate site. H242 contacts heme. T256 contributes to the substrate binding site.

This sequence belongs to the tryptophan 2,3-dioxygenase family. Homotetramer. Heme serves as cofactor.

It catalyses the reaction L-tryptophan + O2 = N-formyl-L-kynurenine. The protein operates within amino-acid degradation; L-tryptophan degradation via kynurenine pathway; L-kynurenine from L-tryptophan: step 1/2. Functionally, heme-dependent dioxygenase that catalyzes the oxidative cleavage of the L-tryptophan (L-Trp) pyrrole ring and converts L-tryptophan to N-formyl-L-kynurenine. Catalyzes the oxidative cleavage of the indole moiety. This Bordetella pertussis (strain Tohama I / ATCC BAA-589 / NCTC 13251) protein is Tryptophan 2,3-dioxygenase.